The following is a 346-amino-acid chain: NADPH dehydrogenase (346 aa).

23–26 (SPMC) is a binding site for FMN. Tyr-28 lines the substrate pocket. Residues Ala-60 and Gln-102 each coordinate FMN. Position 164-167 (164-167 (HGAH)) interacts with substrate. FMN contacts are provided by residues Arg-215 and 307-308 (GR).

This sequence belongs to the NADH:flavin oxidoreductase/NADH oxidase family. NamA subfamily. As to quaternary structure, homotetramer. FMN is required as a cofactor.

The enzyme catalyses A + NADPH + H(+) = AH2 + NADP(+). Its function is as follows. Catalyzes the reduction of the double bond of an array of alpha,beta-unsaturated aldehydes and ketones. It also reduces the nitro group of nitroester and nitroaromatic compounds. It could have a role in detoxification processes. The sequence is that of NADPH dehydrogenase from Bacillus cytotoxicus (strain DSM 22905 / CIP 110041 / 391-98 / NVH 391-98).